Here is a 512-residue protein sequence, read N- to C-terminus: Acid-sensing ion channel 2 (512 aa).

The Cytoplasmic segment spans residues 1 to 42 (MDLKESPSEGSLQPSSIQIFANTSTLHGIRHIFVYGPLTIRR). Residues Ser8 and Ser11 each carry the phosphoserine modification. Residues 43–64 (VLWAVAFVGSLGLLLVESSERV) form a helical membrane-spanning segment. The Extracellular portion of the chain corresponds to 65–424 (SYYFSYQHVT…ETIEQKKAYE (360 aa)). 6 disulfides stabilise this stretch: Cys92/Cys193, Cys289/Cys364, Cys307/Cys360, Cys311/Cys358, Cys320/Cys342, and Cys322/Cys334. Residues Asn365 and Asn392 are each glycosylated (N-linked (GlcNAc...) asparagine). A helical transmembrane segment spans residues 425 to 439 (VAALLGDIGGQMGLF). The Cytoplasmic portion of the chain corresponds to 440-512 (IGASILTILE…TLGTLEEIAC (73 aa)). A GAS motif; ion selectivity filter motif is present at residues 441-443 (GAS).

It belongs to the amiloride-sensitive sodium channel (TC 1.A.6) family. ASIC2 subfamily. Can form homotrimers. Heterotrimer; forms functional heterotrimers producing channel with different properties. Forms heterotrimers with ASIC1; while ASIC1 determines current amplitude, ASIC2 influences the properties of the current. Forms heterotrimers with ASIC3; resulting in channels with distinct properties. Interacts with STOM; STOM regulates the gating of ASIC2-containing channels. Interacts with PICK1; promotes ASIC3 phosphorylation by PKC and activation of ASIC2/ASIC3 heterotrimers. In terms of tissue distribution, expressed in brain, cerebellum, trigeminal sensory ganglia and also detected in testis.

The protein resides in the cell membrane. The catalysed reaction is Na(+)(in) = Na(+)(out). It carries out the reaction K(+)(in) = K(+)(out). It catalyses the reaction Li(+)(in) = Li(+)(out). Inhibited by the diuretic drug amiloride. Inhibited by gadolinium ions, the heterotrimer with ASIC3 being more sensitive. Heterotrimer composed of ASIC1 and ASIC2 are inhibited by the snake venom mambalgin-1. Forms pH-gated trimeric sodium channels that act as postsynaptic excitatory sensors in the nervous system. Upon extracellular acidification, these channels generate rapid, transient inward currents that fully desensitize. Highly selective for sodium, they are permeable to other cations. By forming heterotrimeric channels with ASIC1, could contribute to synaptic plasticity, learning, and memory. Additionally, as acid sensors at nerve terminals, plays a role in mechanosensation and phototransduction. This is Acid-sensing ion channel 2 from Homo sapiens (Human).